Consider the following 352-residue polypeptide: Phenylalanine--tRNA ligase alpha subunit (352 aa).

Residue glutamate 258 participates in Mg(2+) binding.

Belongs to the class-II aminoacyl-tRNA synthetase family. Phe-tRNA synthetase alpha subunit type 1 subfamily. As to quaternary structure, tetramer of two alpha and two beta subunits. Mg(2+) serves as cofactor.

The protein resides in the cytoplasm. The enzyme catalyses tRNA(Phe) + L-phenylalanine + ATP = L-phenylalanyl-tRNA(Phe) + AMP + diphosphate + H(+). This is Phenylalanine--tRNA ligase alpha subunit from Staphylococcus aureus (strain Mu3 / ATCC 700698).